A 54-amino-acid chain; its full sequence is Ovomucoid (54 aa).

The region spanning 4–54 is the Kazal-like domain; it reads VDCSEYPKPVCSLEYMPLCGSDSQTYSNECNFCNAVVDSNGTLTLSHFGKC. 3 disulfides stabilise this stretch: Cys6-Cys36, Cys14-Cys33, and Cys22-Cys54. Asn43 is a glycosylation site (N-linked (GlcNAc...) asparagine).

The protein resides in the secreted. The chain is Ovomucoid from Caracara plancus (Southern caracara).